The following is a 66-amino-acid chain: Stress-induced protein KIN1 (66 aa).

The segment covering 1-13 (MSETNKNAFQAGQ) has biased composition (polar residues). The tract at residues 1–52 (MSETNKNAFQAGQTAGKAEEKSNVLLDKAKDAAAGAGAGAQQAGKSVSDAAA) is disordered. The segment covering 17-31 (KAEEKSNVLLDKAKD) has biased composition (basic and acidic residues). 2 repeats span residues 31–35 (DAAAG) and 49–53 (DAAAG). The segment covering 32–45 (AAAGAGAGAQQAGK) has biased composition (low complexity).

The chain is Stress-induced protein KIN1 (KIN1) from Arabidopsis thaliana (Mouse-ear cress).